The chain runs to 20 residues: Pregnancy-associated glycoprotein 67A (20 aa).

N-linked (GlcNAc...) asparagine glycosylation is found at Asn-4 and Asn-20.

This sequence belongs to the peptidase A1 family. Chorionic epithelium (trophectoderm) and placental cotyledons.

It is found in the secreted. The protein localises to the extracellular space. This is Pregnancy-associated glycoprotein 67A from Bison bonasus (European bison).